The chain runs to 183 residues: Capsid protein (183 aa).

The interval 143 to 183 (LPETTVIRRRGRSPRRRTPSPRRRRSQSPRRRRSQSREPQC) is disordered. Over residues 149-176 (IRRRGRSPRRRTPSPRRRRSQSPRRRRS) the composition is skewed to basic residues. Residues Ser155, Ser162, and Ser170 each carry the phosphoserine; by host modification. The stretch at 155 to 161 (SPRRRTP) is one 1; half-length repeat. Residues 155-177 (SPRRRTPSPRRRRSQSPRRRRSQ) form a 3 X 8 AA repeats of S-P-R-R-R-[PR]-S-Q region. The short motif at 158–175 (RRTPSPRRRRSQSPRRRR) is the Bipartite nuclear localization signal element. Tandem repeats lie at residues 162–169 (SPRRRRSQ) and 170–177 (SPRRRRSQ). The RNA binding stretch occupies residues 177-183 (QSREPQC).

Belongs to the orthohepadnavirus core antigen family. Homodimerizes, then multimerizes. Interacts with cytosol exposed regions of viral L glycoprotein present in the reticulum-to-Golgi compartment. Interacts with human FLNB. Phosphorylated form interacts with host importin alpha; this interaction depends on the exposure of the NLS, which itself depends upon genome maturation and/or phosphorylation of the capsid protein. Interacts with host NUP153. Post-translationally, phosphorylated by host SRPK1, SRPK2, and maybe protein kinase C or GAPDH. Phosphorylation is critical for pregenomic RNA packaging. Protein kinase C phosphorylation is stimulated by HBx protein and may play a role in transport of the viral genome to the nucleus at the late step during the viral replication cycle.

It localises to the virion. The protein resides in the host cytoplasm. Functionally, self assembles to form an icosahedral capsid. Most capsids appear to be large particles with an icosahedral symmetry of T=4 and consist of 240 copies of capsid protein, though a fraction forms smaller T=3 particles consisting of 180 capsid proteins. Entering capsids are transported along microtubules to the nucleus. Phosphorylation of the capsid is thought to induce exposure of nuclear localization signal in the C-terminal portion of the capsid protein that allows binding to the nuclear pore complex via the importin (karyopherin-) alpha and beta. Capsids are imported in intact form through the nuclear pore into the nuclear basket, where it probably binds NUP153. Only capsids that contain the mature viral genome can release the viral DNA and capsid protein into the nucleoplasm. Immature capsids get stuck in the basket. Capsids encapsulate the pre-genomic RNA and the P protein. Pre-genomic RNA is reverse-transcribed into DNA while the capsid is still in the cytoplasm. The capsid can then either be directed to the nucleus, providing more genomes for transcription, or bud through the endoplasmic reticulum to provide new virions. The sequence is that of Capsid protein from Hepatitis B virus genotype B1 (isolate Japan/Ry30/2002) (HBV-B).